We begin with the raw amino-acid sequence, 401 residues long: Nodulation protein E (401 aa).

The 399-residue stretch at 2 to 400 (DRRVVITGIG…GTNAVLAFRQ (399 aa)) folds into the Ketosynthase family 3 (KS3) domain. Active-site for beta-ketoacyl synthase activity residues include C162, H294, and H331. A helical membrane pass occupies residues 329–348 (HAHCLGAASALEMIACVMAI).

Belongs to the thiolase-like superfamily. Beta-ketoacyl-ACP synthases family.

The protein localises to the cell inner membrane. In terms of biological role, proposed to synthesize NOD factor fatty acyl chain. Involved in the synthesis of a highly unsaturated fatty acid moiety, which forms part of a lipo-oligosaccharide that is responsible for host specificity. In Rhizobium leguminosarum bv. trifolii, this protein is Nodulation protein E (nodE).